Reading from the N-terminus, the 480-residue chain is Glutamyl-tRNA(Gln) amidotransferase subunit A (480 aa).

Catalysis depends on charge relay system residues Lys74 and Ser149. Ser173 serves as the catalytic Acyl-ester intermediate.

Belongs to the amidase family. GatA subfamily. As to quaternary structure, heterotrimer of A, B and C subunits.

It carries out the reaction L-glutamyl-tRNA(Gln) + L-glutamine + ATP + H2O = L-glutaminyl-tRNA(Gln) + L-glutamate + ADP + phosphate + H(+). Allows the formation of correctly charged Gln-tRNA(Gln) through the transamidation of misacylated Glu-tRNA(Gln) in organisms which lack glutaminyl-tRNA synthetase. The reaction takes place in the presence of glutamine and ATP through an activated gamma-phospho-Glu-tRNA(Gln). The polypeptide is Glutamyl-tRNA(Gln) amidotransferase subunit A (Vesicomyosocius okutanii subsp. Calyptogena okutanii (strain HA)).